We begin with the raw amino-acid sequence, 163 residues long: Nucleotide-binding protein YajQ (163 aa).

This sequence belongs to the YajQ family.

Its function is as follows. Nucleotide-binding protein. This Escherichia coli O81 (strain ED1a) protein is Nucleotide-binding protein YajQ.